The following is an 81-amino-acid chain: Adenoregulin-related peptide (81 aa).

A signal peptide spans 1 to 22 (MAFLKKSLLLVLFLGLVSLSIC). Residues 23-43 (EEEKRENEDEEEQEDDEQSEM) constitute a propeptide that is removed on maturation. The disordered stretch occupies residues 24 to 46 (EEKRENEDEEEQEDDEQSEMKRG). A compositionally biased stretch (acidic residues) spans 30 to 40 (EDEEEQEDDEQ). I78 is modified (isoleucine amide). The propeptide occupies 79–81 (GEQ).

In terms of tissue distribution, expressed by the skin glands.

Its subcellular location is the secreted. In terms of biological role, has antibacterial activity against Gram-positive bacterium M.luteus NCT C2665 and against Gram-negative bacterium E.coli K12D31. In Agalychnis callidryas (Red-eyed tree frog), this protein is Adenoregulin-related peptide.